Consider the following 573-residue polypeptide: Kinesin light chain 1 (573 aa).

The stretch at 27-156 forms a coiled coil; it reads KTKQVIQGLE…HLEFMNQLKK (130 aa). The span at 155-176 shows a compositional bias: basic and acidic residues; it reads KKYDDDISPSEDKDTDSTKEPL. The disordered stretch occupies residues 155-203; sequence KKYDDDISPSEDKDTDSTKEPLDDLFPNDEDDPGQGIQQQHSSAAAAAQ. Serine 162 bears the Phosphoserine mark. A compositionally biased stretch (low complexity) spans 188–203; sequence GQGIQQQHSSAAAAAQ. 5 TPR repeats span residues 213–246, 255–288, 297–330, 339–372, and 381–414; these read LRTLHNLVIQYASQGRYEVAVPLCKQALEDLEKT, ATMLNILALVYRDQNKYKDAANLLNDALAIREKT, AATLNNLAVLYGKRGKYKEAEPLCKRALEIREKV, AKQLNNLALLCQNQGKYEEVEYYYQRALEIYQTK, and AKTKNNLASCYLKQGKFKQAETLYKEILTRAHER. A Phosphotyrosine modification is found at tyrosine 449. The residue at position 460 (serine 460) is a Phosphoserine. The stretch at 464–497 is one TPR 6 repeat; sequence TTTLKNLGALYRRQGKFEAAETLEEAAMRSRKQG. Phosphoserine; by AMPK occurs at positions 521 and 524. Phosphoserine is present on glutamate 547. A disordered region spans residues 553–573; the sequence is SGRASFCGKRQQQQWPGRRHR.

This sequence belongs to the kinesin light chain family. In terms of assembly, oligomeric complex composed of two heavy chains and two light chains. Interacts with SPAG9. Interacts with ATCAY; may link mitochondria to KLC1 and regulate mitochondria localization into neuron projections. Interacts (via TPR repeats) with TOR1A; the interaction associates TOR1A with the kinesin oligomeric complex. Interacts with BORCS5. Interacts with MAPK8IP3/JIP3 and NTRK2/TRKB; interaction with NTRK2/TRKB is mediated by MAPK8IP3/JIP3. Interacts with CLSTN1; phosphorylation at Ser-460 inhibits interaction with CLSTN1. As to quaternary structure, (Microbial infection) Interacts with adenovirus hexon-interlacing protein; this interaction leads to capsid disruption at the nuclear pore complex during virus entry into host cell. Phosphorylation at Ser-460 by ERK inhibits interaction with CLSTN1 and localization to cytoplasmic vesicles. In terms of tissue distribution, found in a variety of tissues. Mostly abundant in brain and spine.

It localises to the cell projection. It is found in the growth cone. Its subcellular location is the cytoplasmic vesicle. The protein localises to the cytoplasm. The protein resides in the cytoskeleton. Kinesin is a microtubule-associated force-producing protein that may play a role in organelle transport. The light chain may function in coupling of cargo to the heavy chain or in the modulation of its ATPase activity. This is Kinesin light chain 1 (KLC1) from Homo sapiens (Human).